Here is a 1060-residue protein sequence, read N- to C-terminus: Outer capsid protein VP2 (1060 aa).

It belongs to the orbivirus VP2 family.

It is found in the virion. Its function is as follows. The VP2 protein is one of the two proteins (with VP5) which constitute the virus particle outer capsid. It is the major target of the host immunogenic response. The protein is Outer capsid protein VP2 (Segment-2) of Camelus dromedarius (Dromedary).